Here is a 611-residue protein sequence, read N- to C-terminus: Oligoendopeptidase F homolog (611 aa).

His-384 serves as a coordination point for Zn(2+). Residue Glu-385 is part of the active site. The Zn(2+) site is built by His-388 and His-391.

This sequence belongs to the peptidase M3B family. Requires Zn(2+) as cofactor.

This chain is Oligoendopeptidase F homolog (pepF), found in Mycoplasma pneumoniae (strain ATCC 29342 / M129 / Subtype 1) (Mycoplasmoides pneumoniae).